We begin with the raw amino-acid sequence, 528 residues long: U6 snRNA (guanine-N(2))-methyltransferase THUMPD2 (528 aa).

Positions 154–168 are enriched in basic and acidic residues; it reads QEVAKDHGESQEDKL. Disordered stretches follow at residues 154-200 and 437-460; these read QEVA…ADAQ and MKTLSNPDRTGAPDTASPSQRASS. One can recognise a THUMP domain in the interval 162–266; the sequence is ESQEDKLLQG…DAYSVVGIPL (105 aa).

Belongs to the methyltransferase superfamily. In terms of assembly, part of the heterodimeric THUMPD2-TRM112 methyltransferase complex; this complex forms an active tRNA methyltransferase, where TRMT112 acts as an activator of the catalytic subunit THUMPD2.

The protein resides in the nucleus. The enzyme catalyses guanosine in U6 snRNA + S-adenosyl-L-methionine = N(2)-methylguanosine in U6 snRNA + S-adenosyl-L-homocysteine + H(+). In terms of biological role, catalytic subunit of the THUMPD2-TRM112 methyltransferase complex, that specifically mediates the S-adenosyl-L-methionine-dependent N(2)-methylation of guanosine nucleotides, most probably at position 72 (m2G72), in the U6snRNA of the major spliceosome. This modification in the U6 snRNA affects the constitutive splicing efficiency of introns that have suboptimal splice sites and can impact final mRNA levels. The protein is U6 snRNA (guanine-N(2))-methyltransferase THUMPD2 of Mus musculus (Mouse).